A 215-amino-acid chain; its full sequence is Large ribosomal subunit protein bL25 (215 aa).

Acidic residues predominate over residues 192–203; sequence EEATEEEEEAAE. Positions 192-215 are disordered; it reads EEATEEEEEAAEPEVIKRKEEEEE. Residues 205 to 215 show a composition bias toward basic and acidic residues; it reads EVIKRKEEEEE.

The protein belongs to the bacterial ribosomal protein bL25 family. CTC subfamily. As to quaternary structure, part of the 50S ribosomal subunit; part of the 5S rRNA/L5/L18/L25 subcomplex. Contacts the 5S rRNA. Binds to the 5S rRNA independently of L5 and L18.

This is one of the proteins that binds to the 5S RNA in the ribosome where it forms part of the central protuberance. In Thermotoga maritima (strain ATCC 43589 / DSM 3109 / JCM 10099 / NBRC 100826 / MSB8), this protein is Large ribosomal subunit protein bL25.